The following is a 169-amino-acid chain: TPD1 protein homolog 1B (169 aa).

The first 25 residues, 1-25 (MADCTTMRLASSVTIILLLLVASQA), serve as a signal peptide directing secretion.

In terms of tissue distribution, expressed in roots, and at low levels in anthers during meiosis.

Functionally, may play a role during anther development. The polypeptide is TPD1 protein homolog 1B (Oryza sativa subsp. japonica (Rice)).